Reading from the N-terminus, the 1531-residue chain is La-related protein Larp4B (1531 aa).

Residues 112 to 147 (HTHVAHQQQQQQQQQTIQQHLHQQQQQQSPHPAQHL) show a composition bias toward low complexity. 2 disordered regions span residues 112–148 (HTHV…QHLT) and 239–263 (QLPA…EPNI). Residues 262–351 (NIPLDKLKQM…RPNRKRCIII (90 aa)) enclose the HTH La-type RNA-binding domain. The region spanning 348 to 423 (CIIILREISN…KPIMARIKPK (76 aa)) is the RRM domain. Disordered regions lie at residues 533-605 (PLPP…QGGN), 710-736 (AHSH…ASSS), 748-768 (TAPA…QQTQ), 791-1135 (QEAG…SNQQ), 1160-1211 (DVVR…TPAL), and 1251-1285 (ASSK…QPSQ). A compositionally biased stretch (low complexity) spans 565–578 (YNNNHRGNPNNVGG). 2 stretches are compositionally biased toward low complexity: residues 754 to 768 (QPGQ…QQTQ) and 810 to 826 (SSNM…TSMS). Over residues 860 to 884 (SSPSNPHPQQHLMSSSTGSNVQSAG) the composition is skewed to polar residues. Residues 945–959 (ALSSQQQQHHLTTGT) show a composition bias toward low complexity. Positions 966 to 975 (HHYHHHHHHN) are enriched in basic residues. Over residues 983 to 1004 (NSGGLGVSSGGSGGGGSGGGSG) the composition is skewed to gly residues. Over residues 1031 to 1045 (HQQQQQQQQQQQQQQ) the composition is skewed to low complexity. Positions 1068–1086 (TSATAPHTPQATGGASLHN) are enriched in polar residues. Over residues 1087-1115 (STTSSSSSTGLGQKQTLHQQQQQAPQQHQ) the composition is skewed to low complexity. Phosphoserine is present on Ser1123. Positions 1164–1173 (TGGGGGGGGK) are enriched in gly residues. A compositionally biased stretch (polar residues) spans 1183–1200 (PQGQNQPHMAPNYQQHQP). Residues 1270–1280 (KSNKTEDEMHP) are compositionally biased toward basic and acidic residues. Phosphoserine is present on residues Ser1370 and Ser1413. Disordered stretches follow at residues 1393 to 1418 (KAAA…TGSH) and 1450 to 1531 (GGAS…ANNS). 2 stretches are compositionally biased toward polar residues: residues 1467–1477 (ATNTTQGSSAV) and 1502–1515 (QHYG…TNAN).

Probable RNA binding protein. Negatively regulates myc at the protein level, via an unknown mechanism, and may therefore have a role in growth. Has no effect on myc mRNA levels. The chain is La-related protein Larp4B from Drosophila melanogaster (Fruit fly).